Here is a 440-residue protein sequence, read N- to C-terminus: Signal recognition particle 54 kDa protein (440 aa).

GTP contacts are provided by residues 104–111 (GLQGSGKT), 184–188 (DTAGR), and 242–245 (TKLD).

This sequence belongs to the GTP-binding SRP family. SRP54 subfamily. Part of the signal recognition particle protein translocation system, which is composed of SRP and FtsY. Archaeal SRP consists of a 7S RNA molecule of 300 nucleotides and two protein subunits: SRP54 and SRP19.

The protein localises to the cytoplasm. It carries out the reaction GTP + H2O = GDP + phosphate + H(+). Involved in targeting and insertion of nascent membrane proteins into the cytoplasmic membrane. Binds to the hydrophobic signal sequence of the ribosome-nascent chain (RNC) as it emerges from the ribosomes. The SRP-RNC complex is then targeted to the cytoplasmic membrane where it interacts with the SRP receptor FtsY. This Methanosarcina acetivorans (strain ATCC 35395 / DSM 2834 / JCM 12185 / C2A) protein is Signal recognition particle 54 kDa protein.